Reading from the N-terminus, the 97-residue chain is MQKSEGFRSKTRYKLQKHPRQKGMAPLTRALKCYTEGDRVHVVLDPSVQKGMPHPKFHGKTGVIVAQRGRSFLVRVKDGGKYKDIIARPQHLRESKL.

The segment at 1–26 (MQKSEGFRSKTRYKLQKHPRQKGMAP) is disordered. Basic residues predominate over residues 9-21 (SKTRYKLQKHPRQ).

This sequence belongs to the eukaryotic ribosomal protein eL21 family.

This is Large ribosomal subunit protein eL21 from Methanococcus maripaludis (strain C5 / ATCC BAA-1333).